The sequence spans 960 residues: Pentatricopeptide repeat-containing protein At3g63370, chloroplastic (960 aa).

Residues 1-64 (MEYAVTNMRL…PKLACFDGVL (64 aa)) constitute a chloroplast transit peptide. 20 PPR repeats span residues 79-109 (PVEA…IFKT), 115-145 (LDFL…MPDR), 146-180 (TAFA…GVPL), 181-215 (GLSS…GYHS), 216-246 (TGFI…FQEK), 248-282 (DAVL…GPAP), 283-317 (NSYT…STHS), 319-349 (ELYV…MNNA), 350-384 (DVVT…GHKS), 385-419 (DEVS…GWDS), 420-450 (NLQV…MHDK), 451-485 (DLIS…RMEI), 486-516 (DEMI…ILRK), 520-550 (DTVI…IKGK), 551-585 (DVVS…GLSA), 586-620 (DSVA…GFCL), 621-651 (EGSI…IERK), 652-686 (GLLQ…NVSP), 687-717 (DHIS…MEHE), and 723-753 (WPEH…MKTE). Positions 758 to 833 (VWCALLAACR…HPGCSWIEMD (76 aa)) are type E motif. The type E(+) motif stretch occupies residues 834–864 (GKVHKFTARDKSHPESKEIYEKLSEVTRKLE). The interval 865-960 (REVGYVADTK…SGLCSCGDSW (96 aa)) is type DYW motif.

This sequence belongs to the PPR family. PCMP-H subfamily.

It localises to the plastid. Its subcellular location is the chloroplast. In terms of biological role, involved in RNA editing event in chloroplasts. Required for the editing of a single site in rps14 transcript. This is Pentatricopeptide repeat-containing protein At3g63370, chloroplastic (PCMP-H83) from Arabidopsis thaliana (Mouse-ear cress).